The sequence spans 376 residues: Acetate kinase (376 aa).

Asparagine 7 is a binding site for Mg(2+). An ATP-binding site is contributed by lysine 14. Position 71 (arginine 71) interacts with substrate. Aspartate 128 acts as the Proton donor/acceptor in catalysis. Residues 188–192, 262–264, and 310–314 contribute to the ATP site; these read HLGNG, DFR, and GVGEN. Glutamate 364 contributes to the Mg(2+) binding site.

It belongs to the acetokinase family. As to quaternary structure, homodimer. The cofactor is Mg(2+). Mn(2+) is required as a cofactor.

It is found in the cytoplasm. The enzyme catalyses acetate + ATP = acetyl phosphate + ADP. The protein operates within metabolic intermediate biosynthesis; acetyl-CoA biosynthesis; acetyl-CoA from acetate: step 1/2. Functionally, catalyzes the formation of acetyl phosphate from acetate and ATP. Can also catalyze the reverse reaction. This Mycolicibacterium smegmatis (strain ATCC 700084 / mc(2)155) (Mycobacterium smegmatis) protein is Acetate kinase.